The following is a 465-amino-acid chain: tRNA modification GTPase MnmE (465 aa).

(6S)-5-formyl-5,6,7,8-tetrahydrofolate is bound by residues Arg-24, Glu-84, and Lys-127. The TrmE-type G domain maps to 223 to 383 (GLNIVLAGQP…LRGELLRLIG (161 aa)). Residue Asn-233 coordinates K(+). Residues 233–238 (NVGKSS), 252–258 (TAIAGTT), and 277–280 (DTAG) each bind GTP. Mg(2+) is bound at residue Ser-237. 3 residues coordinate K(+): Thr-252, Ile-254, and Thr-257. Position 258 (Thr-258) interacts with Mg(2+). Lys-465 contributes to the (6S)-5-formyl-5,6,7,8-tetrahydrofolate binding site.

This sequence belongs to the TRAFAC class TrmE-Era-EngA-EngB-Septin-like GTPase superfamily. TrmE GTPase family. As to quaternary structure, homodimer. Heterotetramer of two MnmE and two MnmG subunits. It depends on K(+) as a cofactor.

The protein localises to the cytoplasm. Functionally, exhibits a very high intrinsic GTPase hydrolysis rate. Involved in the addition of a carboxymethylaminomethyl (cmnm) group at the wobble position (U34) of certain tRNAs, forming tRNA-cmnm(5)s(2)U34. The chain is tRNA modification GTPase MnmE from Janthinobacterium sp. (strain Marseille) (Minibacterium massiliensis).